Reading from the N-terminus, the 309-residue chain is tRNA uridine(34) hydroxylase (309 aa).

Residues S130–S224 enclose the Rhodanese domain. The Cysteine persulfide intermediate role is filled by C184.

Belongs to the TrhO family.

The enzyme catalyses uridine(34) in tRNA + AH2 + O2 = 5-hydroxyuridine(34) in tRNA + A + H2O. In terms of biological role, catalyzes oxygen-dependent 5-hydroxyuridine (ho5U) modification at position 34 in tRNAs. The polypeptide is tRNA uridine(34) hydroxylase (Rhizobium leguminosarum bv. trifolii (strain WSM2304)).